The sequence spans 316 residues: 4-hydroxy-3-methylbut-2-enyl diphosphate reductase (316 aa).

Cysteine 12 is a binding site for [4Fe-4S] cluster. (2E)-4-hydroxy-3-methylbut-2-enyl diphosphate-binding residues include histidine 41 and histidine 74. Histidine 41 and histidine 74 together coordinate dimethylallyl diphosphate. Isopentenyl diphosphate is bound by residues histidine 41 and histidine 74. [4Fe-4S] cluster is bound at residue cysteine 96. Residue histidine 124 coordinates (2E)-4-hydroxy-3-methylbut-2-enyl diphosphate. Histidine 124 is a binding site for dimethylallyl diphosphate. Residue histidine 124 coordinates isopentenyl diphosphate. Glutamate 126 acts as the Proton donor in catalysis. Residue threonine 167 participates in (2E)-4-hydroxy-3-methylbut-2-enyl diphosphate binding. Cysteine 197 is a binding site for [4Fe-4S] cluster. Positions 225, 226, 227, and 269 each coordinate (2E)-4-hydroxy-3-methylbut-2-enyl diphosphate. Dimethylallyl diphosphate-binding residues include serine 225, serine 226, asparagine 227, and serine 269. Serine 225, serine 226, asparagine 227, and serine 269 together coordinate isopentenyl diphosphate.

It belongs to the IspH family. In terms of assembly, homodimer. [4Fe-4S] cluster serves as cofactor.

The enzyme catalyses isopentenyl diphosphate + 2 oxidized [2Fe-2S]-[ferredoxin] + H2O = (2E)-4-hydroxy-3-methylbut-2-enyl diphosphate + 2 reduced [2Fe-2S]-[ferredoxin] + 2 H(+). It carries out the reaction dimethylallyl diphosphate + 2 oxidized [2Fe-2S]-[ferredoxin] + H2O = (2E)-4-hydroxy-3-methylbut-2-enyl diphosphate + 2 reduced [2Fe-2S]-[ferredoxin] + 2 H(+). It functions in the pathway isoprenoid biosynthesis; dimethylallyl diphosphate biosynthesis; dimethylallyl diphosphate from (2E)-4-hydroxy-3-methylbutenyl diphosphate: step 1/1. Its pathway is isoprenoid biosynthesis; isopentenyl diphosphate biosynthesis via DXP pathway; isopentenyl diphosphate from 1-deoxy-D-xylulose 5-phosphate: step 6/6. Catalyzes the conversion of 1-hydroxy-2-methyl-2-(E)-butenyl 4-diphosphate (HMBPP) into a mixture of isopentenyl diphosphate (IPP) and dimethylallyl diphosphate (DMAPP). Acts in the terminal step of the DOXP/MEP pathway for isoprenoid precursor biosynthesis. In Salmonella paratyphi C (strain RKS4594), this protein is 4-hydroxy-3-methylbut-2-enyl diphosphate reductase.